An 851-amino-acid polypeptide reads, in one-letter code: Alanine--tRNA ligase (851 aa).

Zn(2+)-binding residues include histidine 535, histidine 539, cysteine 637, and histidine 641.

It belongs to the class-II aminoacyl-tRNA synthetase family. Zn(2+) is required as a cofactor.

Its subcellular location is the cytoplasm. The enzyme catalyses tRNA(Ala) + L-alanine + ATP = L-alanyl-tRNA(Ala) + AMP + diphosphate. Catalyzes the attachment of alanine to tRNA(Ala) in a two-step reaction: alanine is first activated by ATP to form Ala-AMP and then transferred to the acceptor end of tRNA(Ala). Also edits incorrectly charged Ser-tRNA(Ala) and Gly-tRNA(Ala) via its editing domain. The protein is Alanine--tRNA ligase of Acholeplasma laidlawii (strain PG-8A).